The chain runs to 532 residues: uncharacterized protein (532 aa).

Disordered stretches follow at residues 26–84 (KALR…TDSE), 97–129 (VFDE…QVGR), and 157–470 (SKAA…HTCQ). The span at 30-40 (GNNNGSSTSGG) shows a compositional bias: low complexity. A compositionally biased stretch (polar residues) spans 67 to 80 (DIISQARRQVSLSR). The segment covering 157 to 181 (SKAAGEESKRHAHFESIQEEEKISE) has biased composition (basic and acidic residues). Over residues 198 to 213 (IQSGSESSDSDSIIFD) the composition is skewed to low complexity. The segment covering 237–249 (VEKKIEKPAVKEQ) has biased composition (basic and acidic residues). Composition is skewed to low complexity over residues 259 to 290 (PTPT…SASE), 298 to 315 (ESQV…SSSK), and 326 to 335 (SSSSSASTIS). The span at 347–356 (KTKKPDKKRA) shows a compositional bias: basic residues. Composition is skewed to basic and acidic residues over residues 357–368 (KPDDIRQNKKPE), 389–403 (STVR…ESLK), 410–419 (KSSEKMEKPR), and 437–448 (RDAEREQDIERR). Basic residues predominate over residues 449 to 461 (REKRARRFRSRRR).

This is an uncharacterized protein from Caenorhabditis elegans.